The following is a 155-amino-acid chain: Large ribosomal subunit protein uL16m (155 aa).

The protein belongs to the universal ribosomal protein uL16 family.

The protein resides in the mitochondrion. The chain is Large ribosomal subunit protein uL16m (RPL16) from Petunia hybrida (Petunia).